The following is an 877-amino-acid chain: Putative ankyrin repeat protein R748 (877 aa).

6 ANK repeats span residues 44 to 74 (IRHI…TINV), 79 to 109 (QNNT…NINY), 115 to 145 (IGIS…AIQQ), 202 to 231 (MGYR…SINE), 243 to 272 (NNND…PIHM), and 282 to 311 (LVPT…SIQA). A disordered region spans residues 525–579 (DSDEDPVCDSNESDNSNDINNHVKSDNKLNSSNDYYDEDDSEDNYNNQSDDEPLV). The span at 533–544 (DSNESDNSNDIN) shows a compositional bias: low complexity.

This is Putative ankyrin repeat protein R748 from Acanthamoeba polyphaga mimivirus (APMV).